A 371-amino-acid polypeptide reads, in one-letter code: Cytochrome b (371 aa).

The next 4 membrane-spanning stretches (helical) occupy residues 25–45, 69–90, 105–125, and 170–190; these read FGSMLLSCLMLQVTTGFFLAV, WMMQNTHAIGASLFFICIYIHI, WMSGTTLLITLMATAFFGYIL, and FFALHFILPFIIISLSSLHIL. Residues His-75 and His-89 each contribute to the heme b site. The heme b site is built by His-174 and His-188. His-193 is a binding site for a ubiquinone. A run of 4 helical transmembrane segments spans residues 218-238, 280-300, 312-332, and 339-358; these read YKDLLLLTLLLTLLLLTTFFL, LGGALALVASILIIMTMPFTH, MSQLMFWTLISTFMTITWAAT, and FMMISQTASMIYFMFFISNP.

This sequence belongs to the cytochrome b family. As to quaternary structure, the cytochrome bc1 complex contains 3 respiratory subunits (MT-CYB, CYC1 and UQCRFS1), 2 core proteins (UQCRC1 and UQCRC2) and probably 6 low-molecular weight proteins. The cofactor is heme b.

Its subcellular location is the mitochondrion inner membrane. Its function is as follows. Component of the ubiquinol-cytochrome c reductase complex (complex III or cytochrome b-c1 complex) that is part of the mitochondrial respiratory chain. The b-c1 complex mediates electron transfer from ubiquinol to cytochrome c. Contributes to the generation of a proton gradient across the mitochondrial membrane that is then used for ATP synthesis. The chain is Cytochrome b (MT-CYB) from Casarea dussumieri (Round Island keel-scaled boa).